The sequence spans 87 residues: Small ribosomal subunit protein uS17 (87 aa).

This sequence belongs to the universal ribosomal protein uS17 family. Part of the 30S ribosomal subunit.

Its function is as follows. One of the primary rRNA binding proteins, it binds specifically to the 5'-end of 16S ribosomal RNA. The sequence is that of Small ribosomal subunit protein uS17 from Exiguobacterium sibiricum (strain DSM 17290 / CCUG 55495 / CIP 109462 / JCM 13490 / 255-15).